A 439-amino-acid chain; its full sequence is Actin-related protein 3 (439 aa).

A disordered region spans residues 40 to 71 (PSAGTGGSGSGRPAVANKPSFLTGGAGPGGHL).

The protein belongs to the actin family. ARP3 subfamily. In terms of assembly, component of the Arp2/3 complex composed.

Its subcellular location is the cytoplasm. It is found in the cytoskeleton. Functions as ATP-binding component of the Arp2/3 complex which is involved in regulation of actin polymerization and together with an activating nucleation-promoting factor (NPF) mediates the formation of branched actin networks. Seems to contact the pointed end of the daughter actin filament. The protein is Actin-related protein 3 (arp-3) of Neurospora crassa (strain ATCC 24698 / 74-OR23-1A / CBS 708.71 / DSM 1257 / FGSC 987).